Reading from the N-terminus, the 363-residue chain is tRNA N6-adenosine threonylcarbamoyltransferase (363 aa).

H138, H142, and Y159 together coordinate Fe cation. Residues 159 to 163 (YVSGG), D191, D212, and S295 contribute to the substrate site. Residue D323 coordinates Fe cation.

It belongs to the KAE1 / TsaD family. The cofactor is Fe(2+).

Its subcellular location is the cytoplasm. It carries out the reaction L-threonylcarbamoyladenylate + adenosine(37) in tRNA = N(6)-L-threonylcarbamoyladenosine(37) in tRNA + AMP + H(+). Required for the formation of a threonylcarbamoyl group on adenosine at position 37 (t(6)A37) in tRNAs that read codons beginning with adenine. Is probably involved in the transfer of the threonylcarbamoyl moiety of threonylcarbamoyl-AMP (TC-AMP) to the N6 group of A37. In Hyperthermus butylicus (strain DSM 5456 / JCM 9403 / PLM1-5), this protein is tRNA N6-adenosine threonylcarbamoyltransferase.